A 460-amino-acid chain; its full sequence is Chromosomal replication initiator protein DnaA (460 aa).

The domain I, interacts with DnaA modulators stretch occupies residues 1 to 91 (MNLTSPKVST…SLWQSEDKSI (91 aa)). The segment at 91-122 (IRSIDIQVIEERNSNFNVILKNREESNHNLGS) is domain II. The segment at 123–342 (PLDPRFTFDN…GALNKVTHTS (220 aa)) is domain III, AAA+ region. ATP-binding residues include Gly169, Gly171, Lys172, and Thr173. The segment at 343–460 (LIGRSMTVES…EINRLKKMFK (118 aa)) is domain IV, binds dsDNA.

Belongs to the DnaA family. Oligomerizes as a right-handed, spiral filament on DNA at oriC.

The protein resides in the cytoplasm. Functionally, plays an essential role in the initiation and regulation of chromosomal replication. ATP-DnaA binds to the origin of replication (oriC) to initiate formation of the DNA replication initiation complex once per cell cycle. Binds the DnaA box (a 9 base pair repeat at the origin) and separates the double-stranded (ds)DNA. Forms a right-handed helical filament on oriC DNA; dsDNA binds to the exterior of the filament while single-stranded (ss)DNA is stabiized in the filament's interior. The ATP-DnaA-oriC complex binds and stabilizes one strand of the AT-rich DNA unwinding element (DUE), permitting loading of DNA polymerase. After initiation quickly degrades to an ADP-DnaA complex that is not apt for DNA replication. Binds acidic phospholipids. The sequence is that of Chromosomal replication initiator protein DnaA from Wolbachia pipientis wMel.